A 366-amino-acid polypeptide reads, in one-letter code: Fe-S cluster assembly protein DRE2 (366 aa).

Positions 8 to 167 (AQGSGRFLLL…KPDFGAQQAV (160 aa)) are N-terminal SAM-like domain. A disordered region spans residues 100 to 136 (RNRDNQIWGSGSDSAAGLGSSDGGGGGGGGEKKSSSE). The span at 108–118 (GSGSDSAAGLG) shows a compositional bias: low complexity. Residues 119 to 128 (SSDGGGGGGG) show a composition bias toward gly residues. The interval 168 to 258 (PLKLGRKKNL…EEELLGEFDM (91 aa)) is linker. Residues Cys268, Cys279, Cys282, and Cys284 each contribute to the [2Fe-2S] cluster site. Positions 268–284 (CRPKAGKRRRACKDCTC) are fe-S binding site A. Positions 329, 332, 340, and 343 each coordinate [4Fe-4S] cluster. 2 short sequence motifs (cx2C motif) span residues 329 to 332 (CGNC) and 340 to 343 (CDGC). The fe-S binding site B stretch occupies residues 329-343 (CGNCALGDAFRCDGC).

The protein belongs to the anamorsin family. In terms of assembly, monomer. Interacts with TAH18. Interacts with MIA40. [2Fe-2S] cluster is required as a cofactor. The cofactor is [4Fe-4S] cluster.

Its subcellular location is the cytoplasm. It localises to the mitochondrion intermembrane space. Functionally, component of the cytosolic iron-sulfur (Fe-S) protein assembly (CIA) machinery required for the maturation of extramitochondrial Fe-S proteins. Part of an electron transfer chain functioning in an early step of cytosolic Fe-S biogenesis, facilitating the de novo assembly of a [4Fe-4S] cluster on the scaffold complex CFD1-NBP35. Electrons are transferred to DRE2 from NADPH via the FAD- and FMN-containing protein TAH18. TAH18-DRE2 are also required for the assembly of the diferric tyrosyl radical cofactor of ribonucleotide reductase (RNR), probably by providing electrons for reduction during radical cofactor maturation in the catalytic small subunit RNR2. In Paracoccidioides lutzii (strain ATCC MYA-826 / Pb01) (Paracoccidioides brasiliensis), this protein is Fe-S cluster assembly protein DRE2.